The sequence spans 385 residues: GTPase Obg (385 aa).

In terms of domain architecture, Obg spans 1–159; the sequence is MHFIDQAEIE…RRLRLELKLI (159 aa). The region spanning 160–328 is the OBG-type G domain; sequence AEVGIVGMPN…LLQRVWQCLG (169 aa). GTP contacts are provided by residues 166–173, 191–195, 213–216, 280–283, and 309–311; these read GMPNAGKS, FTTLQ, DIPG, NKID, and SAV. 2 residues coordinate Mg(2+): S173 and T193.

The protein belongs to the TRAFAC class OBG-HflX-like GTPase superfamily. OBG GTPase family. Monomer. It depends on Mg(2+) as a cofactor.

It localises to the cytoplasm. Its function is as follows. An essential GTPase which binds GTP, GDP and possibly (p)ppGpp with moderate affinity, with high nucleotide exchange rates and a fairly low GTP hydrolysis rate. Plays a role in control of the cell cycle, stress response, ribosome biogenesis and in those bacteria that undergo differentiation, in morphogenesis control. The sequence is that of GTPase Obg from Synechococcus sp. (strain JA-3-3Ab) (Cyanobacteria bacterium Yellowstone A-Prime).